The following is a 418-amino-acid chain: FK506-binding protein 3 (418 aa).

Disordered regions lie at residues 49 to 133, 172 to 273, and 289 to 309; these read PSTL…DDEF, SLTG…ETKK, and LEEGPTKKEEKKEEKKEKPKT. Positions 61-89 are enriched in acidic residues; sequence YDDEDDAGGLLGDYDEDELDISEEEEEEE. Residues 93–103 are compositionally biased toward basic residues; the sequence is KSKKGKGKGKS. Composition is skewed to acidic residues over residues 108-133 and 186-224; these read EEEEEEEEDEDEGDEELIEIDTDDEF and GYDDEDDDEEDDESYDEDEDDYLTPDEEADLEELEDASD. A compositionally biased stretch (basic and acidic residues) spans 225–239; sequence VEAKIQELVEKEQSK. The span at 251-264 shows a compositional bias: acidic residues; sequence PEEEEEEEEEEEEE. The PPIase FKBP-type domain maps to 332–418; it reads GSKVGMRYIG…TFDVKLVSLK (87 aa).

This sequence belongs to the FKBP-type PPIase family. FKBP3/4 subfamily.

The protein resides in the nucleus. The protein localises to the nucleolus. It carries out the reaction [protein]-peptidylproline (omega=180) = [protein]-peptidylproline (omega=0). Its activity is regulated as follows. Inhibited by both FK506 and rapamycin. In terms of biological role, PPIases accelerate the folding of proteins. It catalyzes the cis-trans isomerization of proline imidic peptide bonds in oligopeptides. The sequence is that of FK506-binding protein 3 (FPR3) from Kluyveromyces lactis (strain ATCC 8585 / CBS 2359 / DSM 70799 / NBRC 1267 / NRRL Y-1140 / WM37) (Yeast).